Reading from the N-terminus, the 207-residue chain is Uridine kinase (207 aa).

Residue 14-21 participates in ATP binding; it reads GGSGSGKT.

It belongs to the uridine kinase family.

It localises to the cytoplasm. The catalysed reaction is uridine + ATP = UMP + ADP + H(+). The enzyme catalyses cytidine + ATP = CMP + ADP + H(+). The protein operates within pyrimidine metabolism; CTP biosynthesis via salvage pathway; CTP from cytidine: step 1/3. It participates in pyrimidine metabolism; UMP biosynthesis via salvage pathway; UMP from uridine: step 1/1. The chain is Uridine kinase from Deinococcus deserti (strain DSM 17065 / CIP 109153 / LMG 22923 / VCD115).